The sequence spans 136 residues: Mite allergen Der f 21.0101 (136 aa).

The N-terminal stretch at 1–17 (MKFIIFCAIVMAVSVSG) is a signal peptide.

This sequence belongs to the mite group 5 allergen family. As to quaternary structure, monomer. Homodimer. In terms of tissue distribution, highly expressed in foregut (stomach), midgut and hindgut. Not expressed in body wall, reproductive system or body cavity.

The chain is Mite allergen Der f 21.0101 from Dermatophagoides farinae (American house dust mite).